The primary structure comprises 331 residues: MTGIPFGHHQSLAQVLRSYSQLVKPKIIALLLMTTAGAMWMAGNTDPFKFGVTLLGGGMAAAAANVINMVYDADIDRMMERTRHRPLPSGRIRARHALRFAGILAVMSFGLLACFTNLLAASLAMAGILVYVGVYTHWLKRSSPQNIVIGGAAGAIPPLVGWAAATGELSWAAWVMFALIFLWTPPHFWALAILKREDYARAGVPMLPVVAGERPTAAQILLYALLLVPVSLLLVYPLHVLGSFYLSAATLLGSLLIWKAVQLLQEPHSRERATSLFTFANLYLLLLCGAMGLDRWSLTHTLWDQALASLQGVYASLGALANHLGAMGSLG.

The next 9 helical transmembrane spans lie at 22-42, 50-70, 100-120, 147-167, 174-194, 220-240, 241-261, 273-293, and 307-327; these read LVKP…MWMA, FGVT…INMV, FAGI…NLLA, IVIG…AATG, WVMF…LAIL, ILLY…PLHV, LGSF…WKAV, ATSL…AMGL, and LASL…LGAM.

It belongs to the UbiA prenyltransferase family. Protoheme IX farnesyltransferase subfamily.

The protein localises to the cell inner membrane. It catalyses the reaction heme b + (2E,6E)-farnesyl diphosphate + H2O = Fe(II)-heme o + diphosphate. It functions in the pathway porphyrin-containing compound metabolism; heme O biosynthesis; heme O from protoheme: step 1/1. Functionally, converts heme B (protoheme IX) to heme O by substitution of the vinyl group on carbon 2 of heme B porphyrin ring with a hydroxyethyl farnesyl side group. The polypeptide is Protoheme IX farnesyltransferase (Synechococcus sp. (strain JA-3-3Ab) (Cyanobacteria bacterium Yellowstone A-Prime)).